Here is a 318-residue protein sequence, read N- to C-terminus: Pantothenate kinase (318 aa).

Position 96–103 (96–103 (GSVAVGKS)) interacts with ATP.

It belongs to the prokaryotic pantothenate kinase family.

Its subcellular location is the cytoplasm. The catalysed reaction is (R)-pantothenate + ATP = (R)-4'-phosphopantothenate + ADP + H(+). Its pathway is cofactor biosynthesis; coenzyme A biosynthesis; CoA from (R)-pantothenate: step 1/5. This Coxiella burnetii (strain RSA 493 / Nine Mile phase I) protein is Pantothenate kinase.